Consider the following 249-residue polypeptide: RNA polymerase sigma factor SigI3 (249 aa).

The Polymerase core binding motif lies at 60 to 73; that stretch reads EEFSIGLAAFNEAI. Positions 199–218 form a DNA-binding region, H-T-H motif; that stretch reads MKEVLSRIKVNHKTIQRNRK.

It belongs to the sigma-70 factor family. SigI subfamily. Interacts with RsgI3.

Its subcellular location is the cytoplasm. With respect to regulation, negatively regulated by the anti-sigma-I factor RsgI3. Binding of the polysaccharide substrate to RsgI3 may lead to the release and activation of SigI3. Its function is as follows. Sigma factors are initiation factors that promote the attachment of RNA polymerase to specific initiation sites and are then released. This sigma factor is involved in regulation of cellulosomal genes via an external polysaccharide-sensing mechanism. Recognizes the predicted promoters associated with sigI3 itself, pl11, ce12 and cipA. The sequence is that of RNA polymerase sigma factor SigI3 from Acetivibrio thermocellus (strain ATCC 27405 / DSM 1237 / JCM 9322 / NBRC 103400 / NCIMB 10682 / NRRL B-4536 / VPI 7372) (Clostridium thermocellum).